Consider the following 98-residue polypeptide: uncharacterized protein (98 aa).

The protein resides in the cytoplasm. This is an uncharacterized protein from Saccharomyces cerevisiae (strain ATCC 204508 / S288c) (Baker's yeast).